The primary structure comprises 217 residues: Imidazole glycerol phosphate synthase subunit HisH (217 aa).

Residues 3–217 (TIAIVDYGVG…LYRNFVHWNP (215 aa)) enclose the Glutamine amidotransferase type-1 domain. C82 acts as the Nucleophile in catalysis. Catalysis depends on residues H197 and E199.

Heterodimer of HisH and HisF.

It is found in the cytoplasm. The enzyme catalyses 5-[(5-phospho-1-deoxy-D-ribulos-1-ylimino)methylamino]-1-(5-phospho-beta-D-ribosyl)imidazole-4-carboxamide + L-glutamine = D-erythro-1-(imidazol-4-yl)glycerol 3-phosphate + 5-amino-1-(5-phospho-beta-D-ribosyl)imidazole-4-carboxamide + L-glutamate + H(+). It catalyses the reaction L-glutamine + H2O = L-glutamate + NH4(+). The protein operates within amino-acid biosynthesis; L-histidine biosynthesis; L-histidine from 5-phospho-alpha-D-ribose 1-diphosphate: step 5/9. IGPS catalyzes the conversion of PRFAR and glutamine to IGP, AICAR and glutamate. The HisH subunit catalyzes the hydrolysis of glutamine to glutamate and ammonia as part of the synthesis of IGP and AICAR. The resulting ammonia molecule is channeled to the active site of HisF. The polypeptide is Imidazole glycerol phosphate synthase subunit HisH (Cupriavidus pinatubonensis (strain JMP 134 / LMG 1197) (Cupriavidus necator (strain JMP 134))).